A 1413-amino-acid chain; its full sequence is Sushi, nidogen and EGF-like domain-containing protein 1 (1413 aa).

Positions 1-24 (MRHGVAWALLVAAALGLGARGVRG) are cleaved as a signal peptide. Residues 103 to 258 (AFWADVDNRR…GRWAFRIDDA (156 aa)) form the NIDO domain. Residues N145 and N204 are each glycosylated (N-linked (GlcNAc...) asparagine). 3 consecutive EGF-like domains span residues 268–309 (TTSV…RRCH), 311–347 (DVNE…PTCE), and 349–385 (AQSP…AACE). 18 disulfides stabilise this stretch: C272–C284, C278–C297, C299–C308, C315–C326, C320–C335, C337–C346, C353–C364, C358–C373, C375–C384, C391–C402, C396–C411, C413–C422, C433–C444, C438–C453, C455–C464, C472–C480, C474–C488, and C490–C499. N292 is a glycosylation site (N-linked (GlcNAc...) asparagine). The 23-residue stretch at 352 to 374 (PCDTKECQHGGQCQVENGSAVCV) folds into the Follistatin-like 1 domain. N368 carries an N-linked (GlcNAc...) asparagine glycan. The EGF-like 4; calcium-binding domain occupies 387–423 (DVDDCSPDPCLNGGSCVDLVGNYTCLCAEPFKGLRCE). Residue N408 is glycosylated (N-linked (GlcNAc...) asparagine). 2 consecutive EGF-like domains span residues 429 to 465 (VPDA…LDCR) and 468 to 500 (VPDD…LLCE). Residue N484 is glycosylated (N-linked (GlcNAc...) asparagine). The 24-residue stretch at 507 to 530 (PCNMNTQCPDGGYCMEHGGSYLCV) folds into the Follistatin-like 2 domain. An N-linked (GlcNAc...) asparagine glycan is attached at N536. EGF-like domains are found at residues 541–577 (LPSP…KHCE), 580–616 (RPHL…RHCE), 619–655 (KPDS…RHCE), and 657–693 (APSP…RRCQ). 26 cysteine pairs are disulfide-bonded: C545–C556, C550–C565, C567–C576, C584–C595, C589–C604, C606–C615, C623–C634, C628–C643, C645–C654, C661–C672, C666–C681, C683–C692, C698–C739, C724–C751, C757–C768, C762–C777, C779–C788, C795–C806, C800–C815, C817–C826, C833–C844, C838–C853, C855–C864, C871–C882, C876–C891, and C893–C902. The Sushi domain maps to 696–753 (VDCGPPEEVKHATLRFNGTRLGAVALYACDRGYSLSAPSRIRVCQPHGVWSEPPQCLE). The N-linked (GlcNAc...) asparagine glycan is linked to N712. Residues 753–789 (EIDECRSQPCLHGGSCQDRVAGYLCLCSTGYEGAHCE) form the EGF-like 11; calcium-binding domain. The region spanning 791-827 (ERDECRAHPCRNGGSCRNLPGAYVCRCPAGFVGVHCE) is the EGF-like 12; calcium-binding domain. EGF-like domains lie at 829–865 (EVDA…YHCE) and 867–903 (VSDP…EDCA). N886 carries N-linked (GlcNAc...) asparagine glycosylation. 3 Fibronectin type-III domains span residues 908–1006 (PPTA…TRPR), 1007–1105 (PVEG…TRPL), and 1106–1200 (PPAN…SPRD). N-linked (GlcNAc...) asparagine glycosylation is found at N977, N1015, N1109, and N1139. The interval 1206–1226 (WHQGGHHPRVLKNRPPPARLP) is disordered. Positions 1207-1217 (HQGGHHPRVLK) are enriched in basic residues. In terms of domain architecture, EGF-like 15 spans 1307–1343 (VPGNCSENPCQNGGTCVPGADAHSCDCGPGFKGRRCE). N1310 carries an N-linked (GlcNAc...) asparagine glycan. 3 disulfide bridges follow: C1311–C1322, C1316–C1331, and C1333–C1342. A disordered region spans residues 1394-1413 (TSLKKTPNRKQSKSQTLEKS).

Post-translationally, phosphorylated on serine and threonine residues. In terms of processing, N-glycosylated.

It is found in the secreted. The protein resides in the extracellular space. It localises to the extracellular matrix. In Homo sapiens (Human), this protein is Sushi, nidogen and EGF-like domain-containing protein 1.